Consider the following 184-residue polypeptide: MDTHGEKMKNLEIKKHSRGDLLLLRSSDLHSFRKLQREVDKMGLLSSAEQHLSGILTTLENVADQDNTLYCLTQRGELIGMLKIGTKRLYLYNGKDLHCRSCACLLDFYIRRDFRKRGLGLELFNFMLRDKAISPSRLCYDNPSHKLRSFLKKHFSPCALIKQPNNFVIFAEYFGEPEAAPFER.

The 174-residue stretch at 1–174 (MDTHGEKMKN…NNFVIFAEYF (174 aa)) folds into the N-acetyltransferase domain. Residues 108–121 (FYIR…GLGL) and 144–153 (SHKLRSFLKK) contribute to the acetyl-CoA site.

This sequence belongs to the acetyltransferase ATAT1 family.

The enzyme catalyses L-lysyl-[alpha-tubulin] + acetyl-CoA = N(6)-acetyl-L-lysyl-[alpha-tubulin] + CoA + H(+). Its function is as follows. Specifically acetylates 'Lys-40' in alpha-tubulin on the lumenal side of microtubules. Promotes microtubule destabilization and accelerates microtubule dynamics; this activity may be independent of acetylation activity. Acetylates alpha-tubulin with a slow enzymatic rate, due to a catalytic site that is not optimized for acetyl transfer. Enters the microtubule through each end and diffuses quickly throughout the lumen of microtubules. Acetylates only long/old microtubules because of its slow acetylation rate since it does not have time to act on dynamically unstable microtubules before the enzyme is released. The chain is Alpha-tubulin N-acetyltransferase from Plasmodium vivax (strain Salvador I).